Consider the following 332-residue polypeptide: L-lactate dehydrogenase A chain (332 aa).

NAD(+) contacts are provided by residues 29–57 and R99; that span reads GMVGMASAISVLLKDLCDELALVDVMEDK. 3 residues coordinate substrate: R106, N138, and R169. An NAD(+)-binding site is contributed by N138. The Proton acceptor role is filled by H193. Position 248 (T248) interacts with substrate.

Belongs to the LDH/MDH superfamily. LDH family. Homotetramer.

The protein resides in the cytoplasm. It catalyses the reaction (S)-lactate + NAD(+) = pyruvate + NADH + H(+). It participates in fermentation; pyruvate fermentation to lactate; (S)-lactate from pyruvate: step 1/1. Its function is as follows. Interconverts simultaneously and stereospecifically pyruvate and lactate with concomitant interconversion of NADH and NAD(+). In Fundulus heteroclitus (Killifish), this protein is L-lactate dehydrogenase A chain (ldha).